Consider the following 222-residue polypeptide: GTP cyclohydrolase 1 (222 aa).

Zn(2+) is bound by residues C111, H114, and C182.

The protein belongs to the GTP cyclohydrolase I family. Toroid-shaped homodecamer, composed of two pentamers of five dimers.

It catalyses the reaction GTP + H2O = 7,8-dihydroneopterin 3'-triphosphate + formate + H(+). It functions in the pathway cofactor biosynthesis; 7,8-dihydroneopterin triphosphate biosynthesis; 7,8-dihydroneopterin triphosphate from GTP: step 1/1. In Citrobacter koseri (strain ATCC BAA-895 / CDC 4225-83 / SGSC4696), this protein is GTP cyclohydrolase 1.